The chain runs to 281 residues: Release factor glutamine methyltransferase (281 aa).

Residues Glu142 and Asn184 each contribute to the S-adenosyl-L-methionine site. Residue 184-187 coordinates substrate; that stretch reads NPPY. The segment at 261–281 is disordered; sequence AADHPDLNNRPRFATARKALP.

It belongs to the protein N5-glutamine methyltransferase family. PrmC subfamily.

It catalyses the reaction L-glutaminyl-[peptide chain release factor] + S-adenosyl-L-methionine = N(5)-methyl-L-glutaminyl-[peptide chain release factor] + S-adenosyl-L-homocysteine + H(+). In terms of biological role, methylates the class 1 translation termination release factors RF1/PrfA and RF2/PrfB on the glutamine residue of the universally conserved GGQ motif. The polypeptide is Release factor glutamine methyltransferase (Streptomyces coelicolor (strain ATCC BAA-471 / A3(2) / M145)).